The chain runs to 102 residues: Large ribosomal subunit protein uL23 (102 aa).

This sequence belongs to the universal ribosomal protein uL23 family. As to quaternary structure, part of the 50S ribosomal subunit. Contacts protein L29, and trigger factor when it is bound to the ribosome.

Its function is as follows. One of the early assembly proteins it binds 23S rRNA. One of the proteins that surrounds the polypeptide exit tunnel on the outside of the ribosome. Forms the main docking site for trigger factor binding to the ribosome. The polypeptide is Large ribosomal subunit protein uL23 (Methylobacillus flagellatus (strain ATCC 51484 / DSM 6875 / VKM B-1610 / KT)).